We begin with the raw amino-acid sequence, 1988 residues long: Protein Ycf2 (1988 aa).

1337-1344 (GSIGTGRS) is an ATP binding site. Positions 1377–1396 (SDDDSDDIDDSGDIDDSDDI) are disordered.

It belongs to the Ycf2 family.

It localises to the plastid. The protein resides in the chloroplast stroma. Functionally, probable ATPase of unknown function. Its presence in a non-photosynthetic plant (Epifagus virginiana) and experiments in tobacco indicate that it has an essential function which is probably not related to photosynthesis. The protein is Protein Ycf2 of Cucumis sativus (Cucumber).